The primary structure comprises 441 residues: NADH-quinone oxidoreductase subunit D 1 (441 aa).

Belongs to the complex I 49 kDa subunit family. In terms of assembly, NDH-1 is composed of 14 different subunits. Subunits NuoB, C, D, E, F, and G constitute the peripheral sector of the complex.

The protein localises to the cell membrane. It carries out the reaction a quinone + NADH + 5 H(+)(in) = a quinol + NAD(+) + 4 H(+)(out). Functionally, NDH-1 shuttles electrons from NADH, via FMN and iron-sulfur (Fe-S) centers, to quinones in the respiratory chain. The immediate electron acceptor for the enzyme in this species is believed to be a menaquinone. Couples the redox reaction to proton translocation (for every two electrons transferred, four hydrogen ions are translocated across the cytoplasmic membrane), and thus conserves the redox energy in a proton gradient. This chain is NADH-quinone oxidoreductase subunit D 1, found in Salinispora arenicola (strain CNS-205).